A 104-amino-acid chain; its full sequence is L-rhamnose mutarotase (104 aa).

Y18 is a substrate binding site. Catalysis depends on H22, which acts as the Proton donor. Substrate contacts are provided by residues Y41 and 76–77 (WW).

Belongs to the rhamnose mutarotase family. In terms of assembly, homodimer.

The protein resides in the cytoplasm. It catalyses the reaction alpha-L-rhamnose = beta-L-rhamnose. The protein operates within carbohydrate metabolism; L-rhamnose metabolism. Its function is as follows. Involved in the anomeric conversion of L-rhamnose. The sequence is that of L-rhamnose mutarotase from Oceanobacillus iheyensis (strain DSM 14371 / CIP 107618 / JCM 11309 / KCTC 3954 / HTE831).